Here is a 785-residue protein sequence, read N- to C-terminus: Phenylalanine--tRNA ligase beta subunit (785 aa).

In terms of domain architecture, tRNA-binding spans Ala39–Arg148. Positions Pro399 to Ala474 constitute a B5 domain. Mg(2+)-binding residues include Asp452, Asp458, Glu461, and Glu462. The FDX-ACB domain maps to Ser692–Arg784.

This sequence belongs to the phenylalanyl-tRNA synthetase beta subunit family. Type 1 subfamily. As to quaternary structure, tetramer of two alpha and two beta subunits. Requires Mg(2+) as cofactor.

Its subcellular location is the cytoplasm. The enzyme catalyses tRNA(Phe) + L-phenylalanine + ATP = L-phenylalanyl-tRNA(Phe) + AMP + diphosphate + H(+). The polypeptide is Phenylalanine--tRNA ligase beta subunit (Chromobacterium violaceum (strain ATCC 12472 / DSM 30191 / JCM 1249 / CCUG 213 / NBRC 12614 / NCIMB 9131 / NCTC 9757 / MK)).